The following is a 787-amino-acid chain: Mitochondrial intermediate peptidase (787 aa).

The N-terminal 36 residues, 1–36 (MQNKVLRGILFKNVPLGYSYNRSIRHPTFGNSIIRW), are a transit peptide targeting the mitochondrion. His573 contacts Zn(2+). Residue Glu574 is part of the active site. Zn(2+) is bound by residues His577 and His580.

The protein belongs to the peptidase M3 family. The cofactor is Zn(2+).

The protein localises to the mitochondrion matrix. It catalyses the reaction Release of an N-terminal octapeptide as second stage of processing of some proteins imported into the mitochondrion.. Functionally, cleaves proteins, imported into the mitochondrion, to their mature size. While most mitochondrial precursor proteins are processed to the mature form in one step by mitochondrial processing peptidase (MPP), the sequential cleavage by MIP of an octapeptide after initial processing by MPP is a required step for a subgroup of nuclear-encoded precursor proteins destined for the matrix or the inner membrane. The chain is Mitochondrial intermediate peptidase (OCT1) from Vanderwaltozyma polyspora (strain ATCC 22028 / DSM 70294 / BCRC 21397 / CBS 2163 / NBRC 10782 / NRRL Y-8283 / UCD 57-17) (Kluyveromyces polysporus).